Here is a 495-residue protein sequence, read N- to C-terminus: OTU domain-containing protein CG3251 (495 aa).

Residues 29-150 (LFRKHMLGDA…MGHFETVLTM (122 aa)) enclose the OTU domain. The region spanning 302–364 (NFKVGAKCQV…HPLPPDEFKA (63 aa)) is the Tudor domain. Residues 375–389 (LHNSQMGRQSVQGDQ) are compositionally biased toward polar residues. Positions 375–404 (LHNSQMGRQSVQGDQQGFVPDPMPGTAPSM) are disordered. A compositionally biased stretch (pro residues) spans 395 to 404 (DPMPGTAPSM).

Its function is as follows. Putative OTU-type deubiquitinase. Catalytically inactive towards all diubiquitin molecules and long K48- and K63- linked ubiquitin chains in vitro. Potential modulator of apoptosis. This is OTU domain-containing protein CG3251 from Drosophila melanogaster (Fruit fly).